A 658-amino-acid polypeptide reads, in one-letter code: Carnitine O-palmitoyltransferase 2, mitochondrial (658 aa).

A mitochondrion-targeting transit peptide spans 1 to 25 (MMPRLLLRDWPRCPSLVLGAPSRPL). The Mitochondrial matrix portion of the chain corresponds to 26–178 (SAVSGPAEYL…GLLEPEVFHL (153 aa)). Lys-69 carries the N6-succinyllysine modification. At Lys-79 the chain carries N6-acetyllysine. Lys-85 carries the post-translational modification N6-succinyllysine. Positions 179–208 (NPARSDTDAFKRLIRFVPSSLSWYGAYLVN) form an intramembrane region, note=Mitochondrial inner membrane. The Mitochondrial matrix segment spans residues 209–658 (AYPLDMSQYF…DALEGKAIKT (450 aa)). Lys-239 carries the post-translational modification N6-acetyllysine; alternate. At Lys-239 the chain carries N6-succinyllysine; alternate. An N6-acetyllysine modification is found at Lys-305. Catalysis depends on His-372, which acts as the Proton acceptor. Residue Lys-418 is modified to N6-acetyllysine; alternate. An N6-succinyllysine; alternate modification is found at Lys-418. Lys-424 and Lys-439 each carry N6-succinyllysine. CoA is bound at residue 452–464 (GKEFLKKKKLSPD). (R)-carnitine-binding residues include Tyr-486, Ser-488, and Thr-499. N6-acetyllysine; alternate occurs at positions 510 and 544. N6-succinyllysine; alternate occurs at positions 510 and 544.

Belongs to the carnitine/choline acetyltransferase family.

Its subcellular location is the mitochondrion inner membrane. The catalysed reaction is (R)-carnitine + hexadecanoyl-CoA = O-hexadecanoyl-(R)-carnitine + CoA. It catalyses the reaction octanoyl-CoA + (R)-carnitine = O-octanoyl-(R)-carnitine + CoA. It carries out the reaction decanoyl-CoA + (R)-carnitine = O-decanoyl-(R)-carnitine + CoA. The enzyme catalyses dodecanoyl-CoA + (R)-carnitine = O-dodecanoyl-R-carnitine + CoA. The catalysed reaction is tetradecanoyl-CoA + (R)-carnitine = O-tetradecanoyl-(R)-carnitine + CoA. It catalyses the reaction (R)-carnitine + octadecanoyl-CoA = O-octadecanoyl-(R)-carnitine + CoA. It carries out the reaction eicosanoyl-CoA + (R)-carnitine = O-eicosanoyl-(R)-carnitine + CoA. The enzyme catalyses (9Z)-tetradecenoyl-CoA + (R)-carnitine = O-(9Z)-tetradecenoyl-(R)-carnitine + CoA. The catalysed reaction is (5Z)-tetradecenoyl-CoA + (R)-carnitine = O-(5Z)-tetradecenoyl-(R)-carnitine + CoA. It catalyses the reaction (R)-carnitine + (9Z)-octadecenoyl-CoA = O-(9Z)-octadecenoyl-(R)-carnitine + CoA. It carries out the reaction 4,8-dimethylnonanoyl-CoA + (R)-carnitine = O-4,8-dimethylnonanoyl-(R)-carnitine + CoA. It participates in lipid metabolism; fatty acid beta-oxidation. In terms of biological role, involved in the intramitochondrial synthesis of acylcarnitines from accumulated acyl-CoA metabolites. Reconverts acylcarnitines back into the respective acyl-CoA esters that can then undergo beta-oxidation, an essential step for the mitochondrial uptake of long-chain fatty acids and their subsequent beta-oxidation in the mitochondrion. Active with medium (C8-C12) and long-chain (C14-C18) acyl-CoA esters. The chain is Carnitine O-palmitoyltransferase 2, mitochondrial from Mus musculus (Mouse).